A 469-amino-acid chain; its full sequence is MNTNQRIITIGTICLIVGIISLLLQIGNIILLWMSHSIQTGEKSHPKVCNQSVITYENNTWVNQTYVNISNTNIAAGQGVTPIILAGNSSLCPISGWAIYSKDNSIRIGSKGDIFVMREPFISCSHLECRTFFLTQGALLNDRHSNGTVKDRSPYRTLMSCPIGEAPSPYNSRFESVAWSASACHDGMGWLTIGISGPDNGAVAVLKYNGIITDTIKSWRNKILRTQESECVCINGSCFTIMTDGPSNGQASYKLFKMEKGKIIKSIELDAPNYHYEECSCYPDTGKVVCVCRDNWHASNRPWVSFDQNLDYQIGYICSGVFGDNPRSNDGKGNCGPVLSNGANGVKGFSFRYGNGVWIGRTKSISSRRGFEMIWDPNGWTETDSSFSMKQDIIALTDWSGYSGSFVQHPELTGMNCIRPCFWVELIRGQPKESTIWTSGSSISFCGVNSGTASWSWPDGADLPFTIDK.

Residues 1-12 (MNTNQRIITIGT) lie on the Intravirion side of the membrane. Positions 11-33 (GTICLIVGIISLLLQIGNIILLW) are involved in apical transport and lipid raft association. The chain crosses the membrane as a helical span at residues 13 to 33 (ICLIVGIISLLLQIGNIILLW). The Virion surface segment spans residues 34–469 (MSHSIQTGEK…GADLPFTIDK (436 aa)). A hypervariable stalk region region spans residues 36 to 90 (HSIQTGEKSHPKVCNQSVITYENNTWVNQTYVNISNTNIAAGQGVTPIILAGNSS). N-linked (GlcNAc...) asparagine; by host glycans are attached at residues asparagine 50, asparagine 58, asparagine 63, asparagine 68, and asparagine 88. The segment at 91 to 469 (LCPISGWAIY…GADLPFTIDK (379 aa)) is head of neuraminidase. Intrachain disulfides connect cysteine 92–cysteine 417, cysteine 124–cysteine 129, cysteine 184–cysteine 231, cysteine 233–cysteine 238, cysteine 279–cysteine 292, cysteine 281–cysteine 290, cysteine 318–cysteine 335, and cysteine 421–cysteine 446. Arginine 118 lines the substrate pocket. N-linked (GlcNAc...) asparagine; by host glycosylation occurs at asparagine 146. Aspartate 151 acts as the Proton donor/acceptor in catalysis. Arginine 152 contributes to the substrate binding site. The N-linked (GlcNAc...) asparagine; by host glycan is linked to asparagine 235. 277 to 278 (EE) serves as a coordination point for substrate. Arginine 293 provides a ligand contact to substrate. Ca(2+) is bound by residues aspartate 294, aspartate 324, and asparagine 344. Arginine 368 lines the substrate pocket. Tyrosine 402 serves as the catalytic Nucleophile.

This sequence belongs to the glycosyl hydrolase 34 family. In terms of assembly, homotetramer. Ca(2+) is required as a cofactor. In terms of processing, N-glycosylated.

It localises to the virion membrane. Its subcellular location is the host apical cell membrane. The catalysed reaction is Hydrolysis of alpha-(2-&gt;3)-, alpha-(2-&gt;6)-, alpha-(2-&gt;8)- glycosidic linkages of terminal sialic acid residues in oligosaccharides, glycoproteins, glycolipids, colominic acid and synthetic substrates.. Its activity is regulated as follows. Inhibited by the neuraminidase inhibitors zanamivir (Relenza) and oseltamivir (Tamiflu). These drugs interfere with the release of progeny virus from infected cells and are effective against all influenza strains. Resistance to neuraminidase inhibitors is quite rare. Functionally, catalyzes the removal of terminal sialic acid residues from viral and cellular glycoconjugates. Cleaves off the terminal sialic acids on the glycosylated HA during virus budding to facilitate virus release. Additionally helps virus spread through the circulation by further removing sialic acids from the cell surface. These cleavages prevent self-aggregation and ensure the efficient spread of the progeny virus from cell to cell. Otherwise, infection would be limited to one round of replication. Described as a receptor-destroying enzyme because it cleaves a terminal sialic acid from the cellular receptors. May facilitate viral invasion of the upper airways by cleaving the sialic acid moieties on the mucin of the airway epithelial cells. Likely to plays a role in the budding process through its association with lipid rafts during intracellular transport. May additionally display a raft-association independent effect on budding. Plays a role in the determination of host range restriction on replication and virulence. Sialidase activity in late endosome/lysosome traffic seems to enhance virus replication. The sequence is that of Neuraminidase from Influenza A virus (strain A/New Jersey/8/1976 H1N1).